The chain runs to 496 residues: DNA-dependent metalloprotease SPRTN (496 aa).

At M1 the chain carries N-acetylmethionine. The region spanning 45 to 212 is the SprT-like domain; it reads LQALFLQFND…KTCGGTYIKI (168 aa). H111 is a Zn(2+) binding site. The active site involves E112. Residues H115 and H130 each coordinate Zn(2+). K230 bears the N6-acetyllysine mark. The short motif at 253–261 is the SHP-box element; sequence FSGKGYVLG. At S268 the chain carries Phosphoserine. A Glycyl lysine isopeptide (Lys-Gly) (interchain with G-Cter in SUMO2) cross-link involves residue K303. Positions 326–333 match the PIP-box motif; sequence QSVLSSYF. K342 participates in a covalent cross-link: Glycyl lysine isopeptide (Lys-Gly) (interchain with G-Cter in SUMO2); alternate. K342 is covalently cross-linked (Glycyl lysine isopeptide (Lys-Gly) (interchain with G-Cter in ubiquitin); alternate). Residues 346–459 are disordered; that stretch reads NVNGSPVKSG…STPRSSGGQR (114 aa). K361 participates in a covalent cross-link: Glycyl lysine isopeptide (Lys-Gly) (interchain with G-Cter in SUMO2). The segment covering 382-403 has biased composition (low complexity); sequence SSKVTAPASATVTSAAGTSAAI. S383 is modified (phosphoserine). Residues 412–423 carry the Nuclear localization signal motif; that stretch reads DQFLNKRPRLED. Composition is skewed to polar residues over residues 426-437 and 445-457; these read ALNNIKEQTQSG and RPTA…SSGG. Residue K431 forms a Glycyl lysine isopeptide (Lys-Gly) (interchain with G-Cter in SUMO2) linkage. A UBZ4-type zinc finger spans residues 461–488; the sequence is LVNCPVCQGVVLESQINEHLDRCLEGSK. Zn(2+) is bound by residues C464, C467, H479, and C483.

The protein belongs to the Spartan family. In terms of assembly, homodimer. Interacts (VIA PIP-box) with PCNA (when ubiquitinated). Interacts (via its SHP-box) with VCP/p97. Interacts with RAD18. Interacts with KCTD13 and POLD3. Zn(2+) is required as a cofactor. In terms of processing, autocatalytically cleaved in response to double-stranded DNA-binding: autocatalytic cleavage takes place in trans and leads to inactivation. Monoubiquitinated; monoubiquitination promotes exclusion from chromatin. Deubiquitinated by VCPIP1: deubiquitination is required for subsequent acetylation and recruitment to chromatin and DNA damage sites. Post-translationally, acetylated following deubiquitination by VCPIP1, leading to recruitment to chromatin and DNA damage sites. In terms of processing, phosphorylation by CHEK1 promotes recruitment to chromatin.

It is found in the nucleus. The protein resides in the chromosome. With respect to regulation, DNA-binding activates the protease activity: single-stranded DNA-binding specifically activates ability to cleave covalent DNA-protein cross-links (DPCs). In contrast, double-stranded DNA-binding specifically activates autocatalytic cleavage, and subsequent inactivation. Its function is as follows. DNA-dependent metalloendopeptidase that mediates the proteolytic cleavage of covalent DNA-protein cross-links (DPCs) during DNA synthesis, thereby playing a key role in maintaining genomic integrity. DPCs are highly toxic DNA lesions that interfere with essential chromatin transactions, such as replication and transcription, and which are induced by reactive agents, such as UV light or formaldehyde. Associates with the DNA replication machinery and specifically removes DPCs during DNA synthesis. Catalyzes proteolytic cleavage of the HMCES DNA-protein cross-link following unfolding by the BRIP1/FANCJ helicase. Acts as a pleiotropic protease for DNA-binding proteins cross-linked with DNA, such as TOP1, TOP2A, histones H3 and H4. Mediates degradation of DPCs that are not ubiquitinated, while it is not able to degrade ubiquitinated DPCs. SPRTN activation requires polymerase collision with DPCs followed by helicase bypass of DPCs. Involved in recruitment of VCP/p97 to sites of DNA damage. Also acts as an activator of CHEK1 during normal DNA replication by mediating proteolytic cleavage of CHEK1, thereby promoting CHEK1 removal from chromatin and subsequent activation. Does not activate CHEK1 in response to DNA damage. May also act as a 'reader' of ubiquitinated PCNA: recruited to sites of UV damage and interacts with ubiquitinated PCNA and RAD18, the E3 ubiquitin ligase that monoubiquitinates PCNA. Facilitates chromatin association of RAD18 and is required for efficient PCNA monoubiquitination, promoting a feed-forward loop to enhance PCNA ubiquitination and translesion DNA synthesis. The protein is DNA-dependent metalloprotease SPRTN of Rattus norvegicus (Rat).